The following is a 490-amino-acid chain: MSIRVTQKSYKMSTSGPRAFSSRSFTSGPGARISSSSFSRVGSSSSSFRGSMGTGVGLGGFGGAGVGGITAVTVNQSLLSPLKLEVDPNIQAVRTQEKEQIKSLNNKFASFIDKVRFLEQQNKMLETKWSLLQQQKTSRSNMDNMFESYINNLRRQLEALGQEKLKLEAELGNMQGLVEDFKNKYEDEINKRTEMENEFVLIKKDVDEAYMNKVELESRLEGLTDEINFLRQIHEEEIRELQSQISDTSVVLSMDNSRSLDMDGIIAEVRAQYEDIANRSRAEAETMYQIKYEELQTLAGKHGDDLRRTKTEISEMNRNINRLQAEIEALKGQRASLEAAIADAEQRGEMAIKDAQTKLAELEAALQRAKQDMARQLREYQELMNVKLALDIEITTYRKLLEGEESRLESGMQNMSIHTKTTSGYSGGLSSSYGGLTSPGFSYGMSSFQPGFGSAGGSNTFSRTTKAVVVKKIETRDGKLVSESSDVVSK.

Residues 1 to 27 are compositionally biased toward polar residues; that stretch reads MSIRVTQKSYKMSTSGPRAFSSRSFTS. Positions 1–48 are disordered; the sequence is MSIRVTQKSYKMSTSGPRAFSSRSFTSGPGARISSSSFSRVGSSSSSF. The head stretch occupies residues 1–96; the sequence is MSIRVTQKSY…DPNIQAVRTQ (96 aa). At Ser9 the chain carries Phosphoserine; by PKC/PRKCE. Lys11 is covalently cross-linked (Glycyl lysine isopeptide (Lys-Gly) (interchain with G-Cter in SUMO2)). Phosphoserine is present on residues Ser13, Ser15, Ser21, and Ser22. Position 23 is an omega-N-methylarginine (Arg23). A Phosphoserine; by PKC/PRKCE modification is found at Ser24. Thr26 carries the post-translational modification Phosphothreonine. Ser27 bears the Phosphoserine mark. Arg32 is subject to Omega-N-methylarginine. A phosphoserine mark is found at Ser34, Ser37, and Ser39. Low complexity predominate over residues 34-48; that stretch reads SSSSFSRVGSSSSSF. Arg40 carries the post-translational modification Omega-N-methylarginine. Phosphoserine is present on residues Ser43, Ser44, and Ser47. Arg49 carries the asymmetric dimethylarginine; alternate modification. Omega-N-methylarginine; alternate is present on Arg49. The residue at position 51 (Ser51) is a Phosphoserine. Ser80 carries the phosphoserine; by MAPK modification. Positions 97–132 are coil 1A; that stretch reads EKEQIKSLNNKFASFIDKVRFLEQQNKMLETKWSLL. Positions 97 to 408 constitute an IF rod domain; it reads EKEQIKSLNN…KLLEGEESRL (312 aa). Lys107 bears the N6-malonyllysine mark. Glycyl lysine isopeptide (Lys-Gly) (interchain with G-Cter in SUMO2) cross-links involve residues Lys128 and Lys136. The interval 133–149 is linker 1; the sequence is QQQKTSRSNMDNMFESY. Residues 150–241 form a coil 1B region; sequence INNLRRQLEA…QIHEEEIREL (92 aa). Residue Lys203 forms a Glycyl lysine isopeptide (Lys-Gly) (interchain with G-Cter in SUMO1); alternate linkage. A Glycyl lysine isopeptide (Lys-Gly) (interchain with G-Cter in SUMO2); alternate cross-link involves residue Lys203. The residue at position 213 (Lys213) is an N6-acetyllysine. Positions 242–265 are linker 12; that stretch reads QSQISDTSVVLSMDNSRSLDMDGI. Phosphoserine occurs at positions 259 and 280. The interval 266–403 is coil 2; it reads IAEVRAQYED…ITTYRKLLEG (138 aa). Residues 267–387 form a necessary for interaction with PNN region; it reads AEVRAQYEDI…REYQELMNVK (121 aa). Residue Lys291 forms a Glycyl lysine isopeptide (Lys-Gly) (interchain with G-Cter in SUMO2) linkage. Lys301 participates in a covalent cross-link: Glycyl lysine isopeptide (Lys-Gly) (interchain with G-Cter in SUMO2); alternate. N6-acetyllysine; alternate is present on Lys301. Residue Lys310 forms a Glycyl lysine isopeptide (Lys-Gly) (interchain with G-Cter in SUMO2) linkage. Lys331 is covalently cross-linked (Glycyl lysine isopeptide (Lys-Gly) (interchain with G-Cter in SUMO2); alternate). Residue Lys331 is modified to N6-acetyllysine; alternate. Ser336 is subject to Phosphoserine. Lys399 participates in a covalent cross-link: Glycyl lysine isopeptide (Lys-Gly) (interchain with G-Cter in SUMO2). Positions 404–490 are tail; the sequence is EESRLESGMQ…VSESSDVVSK (87 aa). Phosphoserine is present on residues Ser406, Ser410, Ser416, Ser423, Ser430, Ser432, and Ser438. Lys479 participates in a covalent cross-link: Glycyl lysine isopeptide (Lys-Gly) (interchain with G-Cter in SUMO1); alternate. A Glycyl lysine isopeptide (Lys-Gly) (interchain with G-Cter in SUMO2); alternate cross-link involves residue Lys479. Phosphoserine is present on residues Ser482, Ser484, Ser485, and Ser489.

The protein belongs to the intermediate filament family. In terms of assembly, heterotetramer of two type I and two type II keratins. Forms a heterodimer with KRT18. Associates with KRT20. Interacts with PLEC isoform 1C, when in a heterodimer with KRT18. Interacts with PNN. When associated with KRT19, interacts with DMD. Interacts with TCHP. Interacts with APEX1. Interacts with GPER1. Interacts with EPPK1. Interacts with PKP1 and PKP2. In terms of processing, phosphorylation on serine residues is enhanced during EGF stimulation and mitosis. Ser-80 phosphorylation plays an important role in keratin filament reorganization. Post-translationally, O-glycosylated. O-GlcNAcylation at multiple sites increases solubility, and decreases stability by inducing proteasomal degradation. O-glycosylated (O-GlcNAcylated), in a cell cycle-dependent manner. In terms of tissue distribution, expressed in abundance in the epithelia of colon, bladder, ileum, and stomach, with lower expression observed in earskin (at protein level). Also expressed in pancreas, liver, dudenum and jejunum.

It localises to the cytoplasm. The protein resides in the nucleus. It is found in the nucleoplasm. Its subcellular location is the nucleus matrix. In terms of biological role, together with KRT19, helps to link the contractile apparatus to dystrophin at the costameres of striated muscle. The protein is Keratin, type II cytoskeletal 8 (Krt8) of Mus musculus (Mouse).